Here is a 196-residue protein sequence, read N- to C-terminus: Alpha-crystallin A chain (196 aa).

At Met-1 the chain carries N-acetylmethionine. The tract at residues 1-63 is required for complex formation with BFSP1 and BFSP2; that stretch reads MDVTIQHPWF…RTVLDSCISE (63 aa). Gln-6 carries the deamidated glutamine; partial modification. Ser-45 bears the Phosphoserine mark. Gln-50 is subject to Deamidated glutamine; partial. A sHSP domain is found at 76-185; it reads HAGNPENNPI…GHSERAIPVS (110 aa). N6-acetyllysine is present on residues Lys-93 and Lys-122. His-123 lines the Zn(2+) pocket. Position 124 is a deamidated asparagine; partial (Asn-124). Zn(2+)-binding residues include Glu-125 and His-130. Phosphoserine is present on Ser-145. A Deamidated glutamine; partial modification is found at Gln-170. Residues 170–196 are disordered; sequence QSGLDAGHSERAIPVSQEEKPSSAPLF. A compositionally biased stretch (basic and acidic residues) spans 176–190; that stretch reads GHSERAIPVSQEEKP. Position 177 (His-177) interacts with Zn(2+). Ser-185 carries O-linked (GlcNAc) serine glycosylation.

The protein belongs to the small heat shock protein (HSP20) family. Heteromer composed of three CRYAA and one CRYAB subunits. Inter-subunit bridging via zinc ions enhances stability, which is crucial as there is no protein turn over in the lens. Can also form homodimers and homotetramers (dimers of dimers) which serve as the building blocks of homooligomers. Within homooligomers, the zinc-binding motif is created from residues of 3 different molecules. His-123 and Glu-125 from one molecule are ligands of the zinc ion, and His-130 and His-177 residues from additional molecules complete the site with tetrahedral coordination geometry. Part of a complex required for lens intermediate filament formation composed of BFSP1, BFSP2 and CRYAA. In terms of processing, acetylation at Lys-93 may increase chaperone activity. Post-translationally, undergoes age-dependent proteolytical cleavage at the C-terminus.

It localises to the cytoplasm. The protein localises to the nucleus. Its function is as follows. Contributes to the transparency and refractive index of the lens. Acts as a chaperone, preventing aggregation of various proteins under a wide range of stress conditions. Required for the correct formation of lens intermediate filaments as part of a complex composed of BFSP1, BFSP2 and CRYAA. The protein is Alpha-crystallin A chain (CRYAA) of Spalax ehrenbergi (Middle East blind mole rat).